The primary structure comprises 357 residues: Norreticuline-7-O-methyltransferase (357 aa).

Residue Asp-225 coordinates S-adenosyl-L-methionine. The Proton acceptor role is filled by His-263.

It belongs to the class I-like SAM-binding methyltransferase superfamily. Cation-independent O-methyltransferase family. Expressed instems, leaves, roots and seedlings.

Functionally, involved in the biosynthesis of benzylisoquinoline alkaloids. Catalyzes specifically the methylation of norreticuline at position seven to produce norlaudanine. No activity with norcoclaurine, reticuline, norlaudanosoline, norisoorientaline, scoulerine, salutaridinol, oripavine, salsolinol, codeine or morphine. Involved in papaverine biosynthesis. The chain is Norreticuline-7-O-methyltransferase from Papaver somniferum (Opium poppy).